The primary structure comprises 604 residues: UvrABC system protein C (604 aa).

The 78-residue stretch at 15 to 92 (DLPGCYLMKN…IQKHQPYFNI (78 aa)) folds into the GIY-YIG domain. Residues 197-232 (ETVKKQLTKRMDQAAADLEFERAAELRDQLNYIEMT) enclose the UVR domain.

Belongs to the UvrC family. Interacts with UvrB in an incision complex.

It is found in the cytoplasm. Functionally, the UvrABC repair system catalyzes the recognition and processing of DNA lesions. UvrC both incises the 5' and 3' sides of the lesion. The N-terminal half is responsible for the 3' incision and the C-terminal half is responsible for the 5' incision. The chain is UvrABC system protein C from Lactiplantibacillus plantarum (strain ATCC BAA-793 / NCIMB 8826 / WCFS1) (Lactobacillus plantarum).